Consider the following 219-residue polypeptide: Large ribosomal subunit protein bL31m (219 aa).

2 stretches are compositionally biased toward basic and acidic residues: residues 169–181 (KKEE…KAAE) and 210–219 (KETRHYGKKK). Disordered stretches follow at residues 169–188 (KKEE…ADPF) and 200–219 (TENM…GKKK).

The protein belongs to the bacterial ribosomal protein bL31 family. Highly divergent. Component of the mitochondrial large ribosomal subunit (mt-LSU). Mature N.crassa 74S mitochondrial ribosomes consist of a small (37S) and a large (54S) subunit. The 37S small subunit contains a 16S ribosomal RNA (16S mt-rRNA) and 32 different proteins. The 54S large subunit contains a 23S rRNA (23S mt-rRNA) and 42 different proteins. bL31m bridges the mt-LSU central protuberance and the mt-SSU head.

The protein resides in the mitochondrion. Functionally, component of the mitochondrial ribosome (mitoribosome), a dedicated translation machinery responsible for the synthesis of mitochondrial genome-encoded proteins, including at least some of the essential transmembrane subunits of the mitochondrial respiratory chain. The mitoribosomes are attached to the mitochondrial inner membrane and translation products are cotranslationally integrated into the membrane. The chain is Large ribosomal subunit protein bL31m (mrpl36) from Neurospora crassa (strain ATCC 24698 / 74-OR23-1A / CBS 708.71 / DSM 1257 / FGSC 987).